A 365-amino-acid chain; its full sequence is Phosphoserine aminotransferase (365 aa).

R46 contacts L-glutamate. Pyridoxal 5'-phosphate-binding positions include A80 to T81, W106, T157, D177, and Q200. K201 carries the post-translational modification N6-(pyridoxal phosphate)lysine. N242 to T243 lines the pyridoxal 5'-phosphate pocket.

Belongs to the class-V pyridoxal-phosphate-dependent aminotransferase family. SerC subfamily. As to quaternary structure, homodimer. Requires pyridoxal 5'-phosphate as cofactor.

The protein localises to the cytoplasm. The catalysed reaction is O-phospho-L-serine + 2-oxoglutarate = 3-phosphooxypyruvate + L-glutamate. It catalyses the reaction 4-(phosphooxy)-L-threonine + 2-oxoglutarate = (R)-3-hydroxy-2-oxo-4-phosphooxybutanoate + L-glutamate. The protein operates within amino-acid biosynthesis; L-serine biosynthesis; L-serine from 3-phospho-D-glycerate: step 2/3. It functions in the pathway cofactor biosynthesis; pyridoxine 5'-phosphate biosynthesis; pyridoxine 5'-phosphate from D-erythrose 4-phosphate: step 3/5. Functionally, catalyzes the reversible conversion of 3-phosphohydroxypyruvate to phosphoserine and of 3-hydroxy-2-oxo-4-phosphonooxybutanoate to phosphohydroxythreonine. The polypeptide is Phosphoserine aminotransferase (Leptospira biflexa serovar Patoc (strain Patoc 1 / Ames)).